A 193-amino-acid chain; its full sequence is Acyl carrier protein phosphodiesterase (193 aa).

The protein belongs to the AcpH family.

It catalyses the reaction holo-[ACP] + H2O = apo-[ACP] + (R)-4'-phosphopantetheine + H(+). Its function is as follows. Converts holo-ACP to apo-ACP by hydrolytic cleavage of the phosphopantetheine prosthetic group from ACP. The sequence is that of Acyl carrier protein phosphodiesterase from Enterobacter sp. (strain 638).